We begin with the raw amino-acid sequence, 910 residues long: Ubiquitin carboxyl-terminal hydrolase 9 (910 aa).

Positions 19–134 (TTPEEEKRIV…GGPPIERKLI (116 aa)) constitute a DUSP domain. The disordered stretch occupies residues 68–89 (ISGESSEASRPGPIDNHDIIES). The USP domain occupies 303–894 (AGLSNLGNTC…AAYVLFYRRV (592 aa)). The Nucleophile role is filled by cysteine 312. The active-site Proton acceptor is histidine 852.

It belongs to the peptidase C19 family.

The enzyme catalyses Thiol-dependent hydrolysis of ester, thioester, amide, peptide and isopeptide bonds formed by the C-terminal Gly of ubiquitin (a 76-residue protein attached to proteins as an intracellular targeting signal).. Functionally, recognizes and hydrolyzes the peptide bond at the C-terminal Gly of ubiquitin. Involved in the processing of poly-ubiquitin precursors as well as that of ubiquitinated proteins. This Arabidopsis thaliana (Mouse-ear cress) protein is Ubiquitin carboxyl-terminal hydrolase 9 (UBP9).